A 325-amino-acid chain; its full sequence is Glycerol-3-phosphate dehydrogenase [NAD(P)+] (325 aa).

NADPH contacts are provided by Trp15, Arg35, and Lys107. Residues Lys107, Gly135, and Ser137 each coordinate sn-glycerol 3-phosphate. Ala139 serves as a coordination point for NADPH. Sn-glycerol 3-phosphate contacts are provided by Lys190, Asp243, Ser253, Arg254, and Asn255. Lys190 (proton acceptor) is an active-site residue. Arg254 serves as a coordination point for NADPH. NADPH is bound by residues Leu272 and Glu274.

This sequence belongs to the NAD-dependent glycerol-3-phosphate dehydrogenase family.

Its subcellular location is the cytoplasm. The enzyme catalyses sn-glycerol 3-phosphate + NAD(+) = dihydroxyacetone phosphate + NADH + H(+). The catalysed reaction is sn-glycerol 3-phosphate + NADP(+) = dihydroxyacetone phosphate + NADPH + H(+). The protein operates within membrane lipid metabolism; glycerophospholipid metabolism. Functionally, catalyzes the reduction of the glycolytic intermediate dihydroxyacetone phosphate (DHAP) to sn-glycerol 3-phosphate (G3P), the key precursor for phospholipid synthesis. The polypeptide is Glycerol-3-phosphate dehydrogenase [NAD(P)+] (Afipia carboxidovorans (strain ATCC 49405 / DSM 1227 / KCTC 32145 / OM5) (Oligotropha carboxidovorans)).